The primary structure comprises 227 residues: 7-cyano-7-deazaguanine synthase (227 aa).

8-18 is a binding site for ATP; the sequence is FSGGQDSTTCL. Zn(2+) is bound by residues cysteine 187, cysteine 196, cysteine 199, and cysteine 202.

This sequence belongs to the QueC family. Zn(2+) serves as cofactor.

The catalysed reaction is 7-carboxy-7-deazaguanine + NH4(+) + ATP = 7-cyano-7-deazaguanine + ADP + phosphate + H2O + H(+). It functions in the pathway purine metabolism; 7-cyano-7-deazaguanine biosynthesis. In terms of biological role, catalyzes the ATP-dependent conversion of 7-carboxy-7-deazaguanine (CDG) to 7-cyano-7-deazaguanine (preQ(0)). This chain is 7-cyano-7-deazaguanine synthase, found in Aliivibrio salmonicida (strain LFI1238) (Vibrio salmonicida (strain LFI1238)).